The following is a 601-amino-acid chain: Elongation factor 4 (601 aa).

Positions 7-189 (DTIRNFSIVA…AIVAKLPPPK (183 aa)) constitute a tr-type G domain. Residues 19–24 (DHGKST) and 136–139 (NKID) contribute to the GTP site.

This sequence belongs to the TRAFAC class translation factor GTPase superfamily. Classic translation factor GTPase family. LepA subfamily.

Its subcellular location is the cell inner membrane. The enzyme catalyses GTP + H2O = GDP + phosphate + H(+). In terms of biological role, required for accurate and efficient protein synthesis under certain stress conditions. May act as a fidelity factor of the translation reaction, by catalyzing a one-codon backward translocation of tRNAs on improperly translocated ribosomes. Back-translocation proceeds from a post-translocation (POST) complex to a pre-translocation (PRE) complex, thus giving elongation factor G a second chance to translocate the tRNAs correctly. Binds to ribosomes in a GTP-dependent manner. This Methylobacterium nodulans (strain LMG 21967 / CNCM I-2342 / ORS 2060) protein is Elongation factor 4.